A 505-amino-acid polypeptide reads, in one-letter code: Protein FAM114A2 (505 aa).

Positions 1–65 (MSDKDDIETP…KPSSDLETSK (65 aa)) are disordered. A compositionally biased stretch (basic and acidic residues) spans 51–63 (KRPETKPSSDLET). Ser87, Ser146, and Ser209 each carry phosphoserine. The stretch at 268-295 (LNSLSGEELETLKVELEQLKETFSLAEF) forms a coiled coil. Residues 342 to 366 (KSLTKPLAENEEGEKQSEAENTEQV) are disordered.

Belongs to the FAM114 family.

In Homo sapiens (Human), this protein is Protein FAM114A2 (FAM114A2).